The following is a 274-amino-acid chain: Large ribosomal subunit protein uL2cz/uL2cy (274 aa).

Disordered regions lie at residues Met1 to Pro26 and Met223 to Lys274.

The protein belongs to the universal ribosomal protein uL2 family. As to quaternary structure, part of the 50S ribosomal subunit.

It localises to the plastid. The protein resides in the chloroplast. This is Large ribosomal subunit protein uL2cz/uL2cy (rpl2-A) from Daucus carota (Wild carrot).